A 2055-amino-acid polypeptide reads, in one-letter code: Citron rho-interacting kinase (2055 aa).

Residues 97–359 (FEVRSLVGCG…FEGLCCHPFF (263 aa)) enclose the Protein kinase domain. ATP contacts are provided by residues 103 to 111 (VGCGHFAEV) and Lys126. The active-site Proton acceptor is the Asp221. Positions 360–430 (ARTDWNNIRN…SKALGYLGRS (71 aa)) constitute an AGC-kinase C-terminal domain. Residues 375–398 (VPTLKSDDDTSNFDEPEKNSWVSS) are disordered. Coiled-coil stretches lie at residues 457–747 (LQDS…AQVS), 773–1238 (IKKD…LEYQ), and 1284–1318 (YNELKLALEKEKARCAELEEALQKTRIELRSAREE). The disordered stretch occupies residues 1349–1376 (PEHQPSAMSLLAPPSSRRKEASTPEEFS). Positions 1353–1363 (PSAMSLLAPPS) are enriched in low complexity. The span at 1365 to 1376 (RRKEASTPEEFS) shows a compositional bias: basic and acidic residues. Residues 1388 to 1437 (PHRFNVGLNMRATKCAVCLDTVHFGRQASKCLECQVMCHPKCSTCLPATC) form a Phorbol-ester/DAG-type zinc finger. The region spanning 1469–1589 (SLHLEGWMKV…WVTALESVVA (121 aa)) is the PH domain. In terms of domain architecture, CNH spans 1617–1907 (RLDMNCTLPF…RYLGPAISSG (291 aa)). The tract at residues 1932–2040 (SGTEQHRVPS…RGRLPAGAVR (109 aa)) is disordered. Residues 1939 to 1948 (VPSTSRSSPN) are compositionally biased toward polar residues. Over residues 1974-2031 (SHPREPSTPHRYRDREGRTELRRDKSPGRPLEREKSPGRMLSTRRERSPGRLFEDSSR) the composition is skewed to basic and acidic residues.

The protein belongs to the protein kinase superfamily. AGC Ser/Thr protein kinase family. In terms of assembly, homodimer. Directly interacts with KIF14 depending on the activation state (stronger interaction with the kinase-dead form). Interacts with TTC3.

The protein resides in the cytoplasm. The enzyme catalyses L-seryl-[protein] + ATP = O-phospho-L-seryl-[protein] + ADP + H(+). The catalysed reaction is L-threonyl-[protein] + ATP = O-phospho-L-threonyl-[protein] + ADP + H(+). In terms of biological role, plays a role in cytokinesis. Required for KIF14 localization to the central spindle and midbody. Putative RHO/RAC effector that binds to the GTP-bound forms of RHO and RAC1. It probably binds p21 with a tighter specificity in vivo. Displays serine/threonine protein kinase activity. Plays an important role in the regulation of cytokinesis and the development of the central nervous system. Phosphorylates MYL9/MLC2. This chain is Citron rho-interacting kinase, found in Rattus norvegicus (Rat).